Here is a 135-residue protein sequence, read N- to C-terminus: Immunity protein RhsIA (135 aa).

The disordered stretch occupies residues 58 to 77 (RKQGRQISLSCGEPPEYSPD).

In terms of biological role, immunity component of a toxin-immunity protein module, which functions as a cellular contact-dependent growth inhibition (CDI) system. Specifically inhibits its cognate toxin RhsA. Cell contact is necessary for growth inhibition. The protein is Immunity protein RhsIA (rhsIA) of Dickeya dadantii (strain 3937) (Erwinia chrysanthemi (strain 3937)).